A 243-amino-acid polypeptide reads, in one-letter code: uncharacterized protein (243 aa).

The 179-residue stretch at 26–204 (RVGLVLDITG…ISDDELYDAL (179 aa)) folds into the VWFA domain. Residues 222 to 243 (REQEPPAEKPKKKGFFSRLFSK) form a disordered region. The span at 231-243 (PKKKGFFSRLFSK) shows a compositional bias: basic residues.

This is an uncharacterized protein from Bacillus subtilis (strain 168).